The primary structure comprises 239 residues: 1-(5-phosphoribosyl)-5-[(5-phosphoribosylamino)methylideneamino] imidazole-4-carboxamide isomerase (239 aa).

The active-site Proton acceptor is D8. D130 serves as the catalytic Proton donor.

Belongs to the HisA/HisF family.

Its subcellular location is the cytoplasm. It carries out the reaction 1-(5-phospho-beta-D-ribosyl)-5-[(5-phospho-beta-D-ribosylamino)methylideneamino]imidazole-4-carboxamide = 5-[(5-phospho-1-deoxy-D-ribulos-1-ylimino)methylamino]-1-(5-phospho-beta-D-ribosyl)imidazole-4-carboxamide. It functions in the pathway amino-acid biosynthesis; L-histidine biosynthesis; L-histidine from 5-phospho-alpha-D-ribose 1-diphosphate: step 4/9. This is 1-(5-phosphoribosyl)-5-[(5-phosphoribosylamino)methylideneamino] imidazole-4-carboxamide isomerase from Streptococcus thermophilus (strain ATCC BAA-491 / LMD-9).